The sequence spans 102 residues: Neuropeptide F (102 aa).

The N-terminal stretch at 1–29 (MSNTMRCILIVCVALTLIAAGCNVEASNS) is a signal peptide. Positions 30–32 (RPP) are excised as a propeptide. Position 62 is a phenylalanine amide (F62). Residues 66–102 (GGPLMEMLRNRELENNMAKSINSGGELIRALDEEEVF) constitute a propeptide that is removed on maturation.

This sequence belongs to the NPY family.

Its subcellular location is the secreted. Functionally, an integral part of the sensory system that mediates food signaling, providing the neural basis for the regulation of food response; coordinates larval foraging and social behavior changes during development. May have a hormonal role in females. The sequence is that of Neuropeptide F from Drosophila pseudoobscura pseudoobscura (Fruit fly).